Consider the following 387-residue polypeptide: Formate-dependent phosphoribosylglycinamide formyltransferase (387 aa).

N(1)-(5-phospho-beta-D-ribosyl)glycinamide-binding positions include 15–16 (EL) and Glu75. Residues Arg106, Lys147, 152 to 157 (SSGKGQ), 187 to 190 (EEFI), and Glu195 contribute to the ATP site. An ATP-grasp domain is found at 111-301 (DLASNELNIR…EFELHLRAVL (191 aa)). The Mg(2+) site is built by Glu260 and Glu272. Residues Asp279, Lys349, and 356 to 357 (RR) contribute to the N(1)-(5-phospho-beta-D-ribosyl)glycinamide site.

The protein belongs to the PurK/PurT family. As to quaternary structure, homodimer.

The enzyme catalyses N(1)-(5-phospho-beta-D-ribosyl)glycinamide + formate + ATP = N(2)-formyl-N(1)-(5-phospho-beta-D-ribosyl)glycinamide + ADP + phosphate + H(+). Its pathway is purine metabolism; IMP biosynthesis via de novo pathway; N(2)-formyl-N(1)-(5-phospho-D-ribosyl)glycinamide from N(1)-(5-phospho-D-ribosyl)glycinamide (formate route): step 1/1. In terms of biological role, involved in the de novo purine biosynthesis. Catalyzes the transfer of formate to 5-phospho-ribosyl-glycinamide (GAR), producing 5-phospho-ribosyl-N-formylglycinamide (FGAR). Formate is provided by PurU via hydrolysis of 10-formyl-tetrahydrofolate. This is Formate-dependent phosphoribosylglycinamide formyltransferase from Prochlorococcus marinus (strain NATL2A).